The chain runs to 38 residues: MQPITTASTQATQKDKSSEKKDNYIIKGLFWDPACVIA.

A compositionally biased stretch (polar residues) spans 1–12 (MQPITTASTQAT). The disordered stretch occupies residues 1-20 (MQPITTASTQATQKDKSSEK). A propeptide spanning residues 1-23 (MQPITTASTQATQKDKSSEKKDN) is cleaved from the precursor. Residue Cys-35 is modified to Cysteine methyl ester. Cys-35 carries the S-farnesyl cysteine lipid modification. Residues 36 to 38 (VIA) constitute a propeptide, removed in mature form.

Its subcellular location is the cell membrane. The active factor is excreted into the culture medium by haploid cells of the A mating type and acts on cells of the opposite mating type (type alpha). It mediates the conjugation process between the two types by inhibiting the initiation of DNA synthesis in type alpha cells and synchronizing them with type A. The polypeptide is Mating hormone A-factor 2 (MFA2) (Saccharomyces cerevisiae (strain ATCC 204508 / S288c) (Baker's yeast)).